We begin with the raw amino-acid sequence, 201 residues long: Thymidine kinase (201 aa).

ATP-binding positions include 9–16 (SAMNAGKS) and 87–90 (DECH). Catalysis depends on Glu-88, which acts as the Proton acceptor. The Zn(2+) site is built by Cys-145, Cys-147, Cys-182, and His-185.

Belongs to the thymidine kinase family. Homotetramer.

Its subcellular location is the cytoplasm. The catalysed reaction is thymidine + ATP = dTMP + ADP + H(+). This Photorhabdus laumondii subsp. laumondii (strain DSM 15139 / CIP 105565 / TT01) (Photorhabdus luminescens subsp. laumondii) protein is Thymidine kinase.